The chain runs to 351 residues: uncharacterized protein (351 aa).

Mn(2+)-binding residues include aspartate 215, aspartate 226, histidine 290, glutamate 319, and glutamate 333.

It belongs to the peptidase M24B family. Mn(2+) is required as a cofactor.

This is an uncharacterized protein from Staphylococcus haemolyticus (strain JCSC1435).